Here is a 117-residue protein sequence, read N- to C-terminus: Large ribosomal subunit protein bL20 (117 aa).

Belongs to the bacterial ribosomal protein bL20 family.

Its function is as follows. Binds directly to 23S ribosomal RNA and is necessary for the in vitro assembly process of the 50S ribosomal subunit. It is not involved in the protein synthesizing functions of that subunit. The sequence is that of Large ribosomal subunit protein bL20 from Mycoplasma mobile (strain ATCC 43663 / 163K / NCTC 11711) (Mesomycoplasma mobile).